Here is a 357-residue protein sequence, read N- to C-terminus: MLLEKLNSATSKIKLIEEKLQDINLIKDQKKYSKIIKEYTYLEKINTKKIEYEKILSQINDTKTILEKEDQQEMKELIKQELIDLDKKKEDLEHQIKILLLPQDENDSKNIIIEIRAGTGGEEAALFANNLYSMYIKYSEKKKWKTEIINFNETELGGFKEIIFEIKGKDVFKKLKYESGVHRVQRIPITESNGRLQTSAATVAVLPNIEETEIDINEKDLRIDVYRSSGAGGQHVNTTDSAVRITHLPTGIVVQCQNERSQHKNKDQAMKILRARLYEFEDSKKQEQRSSNRKQQVGSGDRSERIRTYNFPQNRITDHRANITLYKLEEFMQGELDPLLDPLMIALQEQELKSNSI.

At Q234 the chain carries N5-methylglutamine. The segment at 283–313 is disordered; the sequence is SKKQEQRSSNRKQQVGSGDRSERIRTYNFPQ.

It belongs to the prokaryotic/mitochondrial release factor family. Post-translationally, methylated by PrmC. Methylation increases the termination efficiency of RF1.

The protein resides in the cytoplasm. Its function is as follows. Peptide chain release factor 1 directs the termination of translation in response to the peptide chain termination codons UAG and UAA. In Borreliella burgdorferi (strain ATCC 35210 / DSM 4680 / CIP 102532 / B31) (Borrelia burgdorferi), this protein is Peptide chain release factor 1 (prfA).